The chain runs to 311 residues: p-hydroxybenzoic acid efflux pump subunit AaeA (311 aa).

Residues isoleucine 11 to phenylalanine 31 form a helical membrane-spanning segment.

It belongs to the membrane fusion protein (MFP) (TC 8.A.1) family.

The protein resides in the cell inner membrane. Functionally, forms an efflux pump with AaeB. The polypeptide is p-hydroxybenzoic acid efflux pump subunit AaeA (Yersinia enterocolitica serotype O:8 / biotype 1B (strain NCTC 13174 / 8081)).